A 132-amino-acid chain; its full sequence is Interleukin-13 (132 aa).

A signal peptide spans 1 to 18 (MALLLTMVIALTCLGGFA). N-linked (GlcNAc...) asparagine glycosylation is found at asparagine 38, asparagine 49, asparagine 57, and asparagine 72. 2 cysteine pairs are disulfide-bonded: cysteine 48-cysteine 76 and cysteine 64-cysteine 90.

This sequence belongs to the IL-4/IL-13 family. As to quaternary structure, interacts with IL13RA2.

It is found in the secreted. Its function is as follows. Cytokine that plays important roles in allergic inflammation and immune response to parasite infection. Synergizes with IL2 in regulating interferon-gamma synthesis. Stimulates B-cell proliferation, and activation of eosinophils, basophils, and mast cells. Plays an important role in controlling IL33 activity by modulating the production of transmembrane and soluble forms of interleukin-1 receptor-like 1/IL1RL1. Displays the capacity to antagonize Th1-driven proinflammatory immune response and downregulates synthesis of many proinflammatory cytokines including IL1, IL6, IL10, IL12 and TNF-alpha through a mechanism that partially involves suppression of NF-kappa-B. Also functions on nonhematopoietic cells, including endothelial cells where it induces vascular cell adhesion protein 1/VCAM1, which is important in the recruitment of eosinophils. Exerts its biological effects through its receptors which comprises the IL4R chain and the IL13RA1 chain, to activate JAK1 and TYK2, leading to the activation of STAT6. Aside from IL13RA1, another receptor IL13RA2 acts as a high affinity decoy for IL13 and mediates internalization and depletion of extracellular IL13. This chain is Interleukin-13 (IL13), found in Macaca thibetana (Pere David's macaque).